Reading from the N-terminus, the 430-residue chain is T-kininogen 1 (430 aa).

Positions 1–18 are cleaved as a signal peptide; sequence MKLITILLLCSRLLPSLA. Gln19 is modified (pyrrolidone carboxylic acid). Residues 28 to 131 form the Cystatin kininogen-type 1 domain; that stretch reads CNDETVFQAV…TQICNITPGK (104 aa). 9 cysteine pairs are disulfide-bonded: Cys28–Cys404, Cys83–Cys94, Cys107–Cys125, Cys141–Cys144, Cys205–Cys217, Cys228–Cys247, Cys263–Cys266, Cys327–Cys339, and Cys350–Cys369. Residue Asn82 is glycosylated (N-linked (GlcNAc...) asparagine). The Cystatin kininogen-type 2 domain maps to 150 to 253; the sequence is MDSSDLKPVL…SQSCDLYPGD (104 aa). 2 N-linked (GlcNAc...) asparagine glycosylation sites follow: Asn168 and Asn204. The 104-residue stretch at 272–375 folds into the Cystatin kininogen-type 3 domain; it reads VDSPELKEAL…TVRCQALDMM (104 aa). N-linked (GlcNAc...) asparagine glycosylation is present at Asn326. The tract at residues 411 to 430 is disordered; the sequence is SKARAGPAPDHQAEASTVTP.

As T-kinin is preceded by a Met instead of an Arg or Lys, it is not released from its precursor by either tissue or plasma kallikrein. As to expression, plasma.

It is found in the secreted. The protein localises to the extracellular space. In terms of biological role, kininogens are plasma glycoproteins with a number of functions: (1) as precursor of the active peptide bradykinin they effect smooth muscle contraction, induction of hypotension and increase of vascular permeability. (2) They play a role in blood coagulation by helping to position optimally prekallikrein and factor XI next to factor XII. (3) They are inhibitor of thiol proteases. The chain is T-kininogen 1 (Map1) from Rattus norvegicus (Rat).